The primary structure comprises 156 residues: Small ribosomal subunit protein uS7 (156 aa).

It belongs to the universal ribosomal protein uS7 family. In terms of assembly, part of the 30S ribosomal subunit. Contacts proteins S9 and S11.

In terms of biological role, one of the primary rRNA binding proteins, it binds directly to 16S rRNA where it nucleates assembly of the head domain of the 30S subunit. Is located at the subunit interface close to the decoding center, probably blocks exit of the E-site tRNA. This Ligilactobacillus salivarius (strain UCC118) (Lactobacillus salivarius) protein is Small ribosomal subunit protein uS7.